Reading from the N-terminus, the 503-residue chain is Probable cytosol aminopeptidase (503 aa).

Residues Lys-274 and Asp-279 each coordinate Mn(2+). Lys-286 is an active-site residue. Residues Asp-297, Asp-356, and Glu-358 each contribute to the Mn(2+) site. Residue Arg-360 is part of the active site.

Belongs to the peptidase M17 family. Mn(2+) serves as cofactor.

It localises to the cytoplasm. It catalyses the reaction Release of an N-terminal amino acid, Xaa-|-Yaa-, in which Xaa is preferably Leu, but may be other amino acids including Pro although not Arg or Lys, and Yaa may be Pro. Amino acid amides and methyl esters are also readily hydrolyzed, but rates on arylamides are exceedingly low.. The catalysed reaction is Release of an N-terminal amino acid, preferentially leucine, but not glutamic or aspartic acids.. Presumably involved in the processing and regular turnover of intracellular proteins. Catalyzes the removal of unsubstituted N-terminal amino acids from various peptides. This chain is Probable cytosol aminopeptidase, found in Paraburkholderia phymatum (strain DSM 17167 / CIP 108236 / LMG 21445 / STM815) (Burkholderia phymatum).